Consider the following 260-residue polypeptide: Dehydrogenase/reductase SDR family member 4 (260 aa).

Isoleucine 14–valine 38 lines the NADP(+) pocket. Position 148 (serine 148) interacts with substrate. The active-site Proton acceptor is the tyrosine 161. Residue lysine 165 participates in NADP(+) binding.

Belongs to the short-chain dehydrogenases/reductases (SDR) family.

The enzyme catalyses a secondary alcohol + NADP(+) = a ketone + NADPH + H(+). Functionally, catalyzes the reduction of isatin, 4-oxonon-2-enal, 9,10-phenanthrenequinone, menadione, 2,3-hexaenadione, 3,4-hexanedione and 2,3-heptanedione. This chain is Dehydrogenase/reductase SDR family member 4, found in Caenorhabditis elegans.